Here is a 511-residue protein sequence, read N- to C-terminus: Probable lipid II flippase MurJ (511 aa).

A run of 11 helical transmembrane segments spans residues 25 to 45 (DILIASIFGASMFTDAFFISF), 85 to 105 (SSILGFMSFFLLLLTILGGFF), 133 to 153 (IMFPYILLISLSSLCSSILNS), 156 to 178 (YFSIPAFSPIFLNISIIFFSVFF), 245 to 265 (ISLIINTIFSSLLNSGSISWI), 271 to 291 (LIEFPVGILGVSLSTVLFTSL), 315 to 335 (LIVSLPGSVILFFLAKPVIIV), 356 to 376 (LYSCGLISFIFVKILSSAFYA), 400 to 420 (FLIFYFQHAGIALSLSITSWV), 442 to 462 (FIFIIYIILATLVMIVILFVV), and 481 to 501 (LFFGKYVSGITYLFMMNILGI).

Belongs to the MurJ/MviN family.

It is found in the cell inner membrane. It participates in cell wall biogenesis; peptidoglycan biosynthesis. Functionally, involved in peptidoglycan biosynthesis. Transports lipid-linked peptidoglycan precursors from the inner to the outer leaflet of the cytoplasmic membrane. This Buchnera aphidicola subsp. Acyrthosiphon pisum (strain APS) (Acyrthosiphon pisum symbiotic bacterium) protein is Probable lipid II flippase MurJ.